The following is a 379-amino-acid chain: MKRDLYETLGVKKNADEKELKSAFRKLAMKYHPDRNPGDQEAEKSFKEINEAYETLKDPQKRAAYDRYGHAAFEQGGMGAGFGNGFAGGSAGGFSDIFEDIFGEMMGGRQRRSSGGRERGADLRYNMEITLEEAYSGKTAQIRVPTSVTCDVCTGSGAKPGTSPKTCATCQGSGRIRAAQGFFSIERTCPTCGGRGQTITDPCTKCHGQGRVTEERTLSVNIPTGIEDGTRIRLSGEGEAGLRGGPAGDLYIFLSVKPHEFYQRDGADLYCSVPISMTTAALGGKFDVTTLDGTKSRVTVPEGTQAGKQFRLKGKGMPVLRSNQTGDLYIQIQIETPQKLTKRQRELLQEFEQISSKENNPQSTGFFSRMKDFFDTLSE.

A J domain is found at 4-69; sequence DLYETLGVKK…QKRAAYDRYG (66 aa). The segment at 137-215 adopts a CR-type zinc-finger fold; that stretch reads GKTAQIRVPT…CHGQGRVTEE (79 aa). 8 residues coordinate Zn(2+): Cys150, Cys153, Cys167, Cys170, Cys189, Cys192, Cys203, and Cys206. 4 CXXCXGXG motif repeats span residues 150 to 157, 167 to 174, 189 to 196, and 203 to 210; these read CDVCTGSG, CATCQGSG, CPTCGGRG, and CTKCHGQG.

It belongs to the DnaJ family. Homodimer. It depends on Zn(2+) as a cofactor.

Its subcellular location is the cytoplasm. Participates actively in the response to hyperosmotic and heat shock by preventing the aggregation of stress-denatured proteins and by disaggregating proteins, also in an autonomous, DnaK-independent fashion. Unfolded proteins bind initially to DnaJ; upon interaction with the DnaJ-bound protein, DnaK hydrolyzes its bound ATP, resulting in the formation of a stable complex. GrpE releases ADP from DnaK; ATP binding to DnaK triggers the release of the substrate protein, thus completing the reaction cycle. Several rounds of ATP-dependent interactions between DnaJ, DnaK and GrpE are required for fully efficient folding. Also involved, together with DnaK and GrpE, in the DNA replication of plasmids through activation of initiation proteins. This chain is Chaperone protein DnaJ, found in Sinorhizobium fredii (strain NBRC 101917 / NGR234).